A 166-amino-acid polypeptide reads, in one-letter code: Small ribosomal subunit protein uS5 (166 aa).

The S5 DRBM domain occupies 11 to 74; sequence LIDKVVHISR…ESAKRTMFEV (64 aa).

The protein belongs to the universal ribosomal protein uS5 family. Part of the 30S ribosomal subunit. Contacts proteins S4 and S8.

In terms of biological role, with S4 and S12 plays an important role in translational accuracy. Functionally, located at the back of the 30S subunit body where it stabilizes the conformation of the head with respect to the body. The chain is Small ribosomal subunit protein uS5 from Syntrophobacter fumaroxidans (strain DSM 10017 / MPOB).